The sequence spans 522 residues: Amphoterin-induced protein 2 (522 aa).

The first 39 residues, 1 to 39 (MSLRVHTLPTLLGAVVRPGCRELLCLLMITVTVGPGASG), serve as a signal peptide directing secretion. An LRRNT domain is found at 40-68 (VCPTACICATDIVSCTNKNLSKVPGNLFR). Residues 40–398 (VCPTACICAT…RSHAHEAFNT (359 aa)) are Extracellular-facing. Intrachain disulfides connect Cys41-Cys47 and Cys45-Cys54. The N-linked (GlcNAc...) asparagine glycan is linked to Asn58. LRR repeat units follow at residues 69–90 (LIKR…WIPV), 94–115 (KLNT…SFST), 118–139 (NLKC…VFQE), 142–163 (VLEV…AFGG), 166–187 (QLQK…LYVG), and 193–214 (ELMF…HINL). The N-linked (GlcNAc...) asparagine glycan is linked to Asn104. Residues 228–284 (NPFVCDCSLYSLLVFWYRRHFSSVMDFKNDYTCRLWSDSRHSRQVLLLQDSFMNCSD) form the LRRCT domain. 2 cysteine pairs are disulfide-bonded: Cys232-Cys260 and Cys234-Cys282. N-linked (GlcNAc...) asparagine glycans are attached at residues Asn281, Asn288, Asn345, Asn373, Asn381, and Asn384. Residues 289-379 (GSFRALGFIH…RLLNETVDVT (91 aa)) form the Ig-like C2-type domain. A disulfide bridge connects residues Cys310 and Cys363. A helical transmembrane segment spans residues 399–419 (AFTTLAACVASIVLVLLYLYL). Residues 420-522 (TPCPCKCKTK…FSDTPFVAST (103 aa)) are Cytoplasmic-facing. Positions 501-522 (RGKSDSDSVNSVFSDTPFVAST) are disordered.

It belongs to the immunoglobulin superfamily. AMIGO family. Binds itself as well as AMIGO1 and AMIGO3. As to expression, highest levels in breast, ovary, cervix, and uterus. Lower levels in lung, colon, and rectum. Differentially expressed in 56% of thyroid, 57% of pancreatic and 45% of stomach cancers.

Its subcellular location is the cell membrane. The protein resides in the nucleus. In terms of biological role, required for depolarization-dependent survival of cultured cerebellar granule neurons. May mediate homophilic as well as heterophilic cell-cell interaction with AMIGO1 or AMIGO3. May contribute to signal transduction through its intracellular domain. May be required for tumorigenesis of a subset of gastric adenocarcinomas. The sequence is that of Amphoterin-induced protein 2 from Homo sapiens (Human).